Reading from the N-terminus, the 315-residue chain is tRNA dimethylallyltransferase (315 aa).

13-20 lines the ATP pocket; it reads GPTASGKT. Position 15 to 20 (15 to 20) interacts with substrate; sequence TASGKT. Interaction with substrate tRNA stretches follow at residues 38 to 41, 162 to 166, 243 to 248, and 276 to 283; these read DSAL, QRLSR, RCVGYR, and KRQITWLR.

Belongs to the IPP transferase family. In terms of assembly, monomer. Mg(2+) is required as a cofactor.

It catalyses the reaction adenosine(37) in tRNA + dimethylallyl diphosphate = N(6)-dimethylallyladenosine(37) in tRNA + diphosphate. Catalyzes the transfer of a dimethylallyl group onto the adenine at position 37 in tRNAs that read codons beginning with uridine, leading to the formation of N6-(dimethylallyl)adenosine (i(6)A). The protein is tRNA dimethylallyltransferase of Vibrio cholerae serotype O1 (strain ATCC 39541 / Classical Ogawa 395 / O395).